Here is a 94-residue protein sequence, read N- to C-terminus: Pyrimidine/purine nucleoside phosphorylase (94 aa).

Belongs to the nucleoside phosphorylase PpnP family.

The enzyme catalyses a purine D-ribonucleoside + phosphate = a purine nucleobase + alpha-D-ribose 1-phosphate. It catalyses the reaction adenosine + phosphate = alpha-D-ribose 1-phosphate + adenine. The catalysed reaction is cytidine + phosphate = cytosine + alpha-D-ribose 1-phosphate. It carries out the reaction guanosine + phosphate = alpha-D-ribose 1-phosphate + guanine. The enzyme catalyses inosine + phosphate = alpha-D-ribose 1-phosphate + hypoxanthine. It catalyses the reaction thymidine + phosphate = 2-deoxy-alpha-D-ribose 1-phosphate + thymine. The catalysed reaction is uridine + phosphate = alpha-D-ribose 1-phosphate + uracil. It carries out the reaction xanthosine + phosphate = alpha-D-ribose 1-phosphate + xanthine. Its function is as follows. Catalyzes the phosphorolysis of diverse nucleosides, yielding D-ribose 1-phosphate and the respective free bases. Can use uridine, adenosine, guanosine, cytidine, thymidine, inosine and xanthosine as substrates. Also catalyzes the reverse reactions. This chain is Pyrimidine/purine nucleoside phosphorylase, found in Salmonella typhimurium (strain LT2 / SGSC1412 / ATCC 700720).